The sequence spans 115 residues: Non-specific lipid-transfer protein 4.1 (115 aa).

An N-terminal signal peptide occupies residues 1–25; sequence MARAAASQLVLVALVAAMLLVAADA. 4 cysteine pairs are disulfide-bonded: cysteine 29-cysteine 77, cysteine 39-cysteine 54, cysteine 55-cysteine 97, and cysteine 75-cysteine 111.

This sequence belongs to the plant LTP family.

Its function is as follows. Plant non-specific lipid-transfer proteins transfer phospholipids as well as galactolipids across membranes. May play a role in wax or cutin deposition in the cell walls of expanding epidermal cells and certain secretory tissues. The chain is Non-specific lipid-transfer protein 4.1 (LTP4.1) from Hordeum vulgare (Barley).